The primary structure comprises 243 residues: UPF0173 metal-dependent hydrolase Caur_2542 (243 aa).

Belongs to the UPF0173 family.

The chain is UPF0173 metal-dependent hydrolase Caur_2542 from Chloroflexus aurantiacus (strain ATCC 29366 / DSM 635 / J-10-fl).